We begin with the raw amino-acid sequence, 213 residues long: Thymidylate kinase (213 aa).

10–17 provides a ligand contact to ATP; the sequence is GIDGCGKT.

It belongs to the thymidylate kinase family.

It carries out the reaction dTMP + ATP = dTDP + ADP. In terms of biological role, phosphorylation of dTMP to form dTDP in both de novo and salvage pathways of dTTP synthesis. This Synechococcus sp. (strain WH7803) protein is Thymidylate kinase.